Reading from the N-terminus, the 325-residue chain is Glucosyl-3-phosphoglycerate synthase (325 aa).

UDP-alpha-D-glucose is bound by residues 37 to 41 (PSLNE), serine 71, lysine 104, and 124 to 125 (DS). A Mn(2+)-binding site is contributed by aspartate 126. 171–174 (GRVT) is a (2R)-3-phosphoglycerate binding site. Residues 216–219 (YGVE) and 243–248 (RIHDNQ) contribute to the UDP-alpha-D-glucose site. A Mn(2+)-binding site is contributed by histidine 245. Asparagine 247 serves as a coordination point for (2R)-3-phosphoglycerate.

Belongs to the glycosyltransferase 2 family. Homodimer in solution. Requires Co(2+) as cofactor. It depends on Mg(2+) as a cofactor. Mn(2+) is required as a cofactor. The cofactor is Ni(2+). Zn(2+) serves as cofactor.

The catalysed reaction is an NDP-alpha-D-glucose + (2R)-3-phosphoglycerate = (2R)-2-O-(alpha-D-glucopyranosyl)-3-phospho-glycerate + a ribonucleoside 5'-diphosphate + H(+). It catalyses the reaction (2R)-3-phosphoglycerate + UDP-alpha-D-glucose = (2R)-2-O-(alpha-D-glucopyranosyl)-3-phospho-glycerate + UDP + H(+). The enzyme catalyses ADP-alpha-D-glucose + (2R)-3-phosphoglycerate = (2R)-2-O-(alpha-D-glucopyranosyl)-3-phospho-glycerate + ADP + H(+). With respect to regulation, inhibited by ADP and EDTA. Functionally, involved in the biosynthesis of the compatible solute mannosylglucosylglycerate through a phosphorylating pathway. Catalyzes the transfer of the glucose moiety from a nuleotide sugar such as UDP-alpha-D-glucose to the position 2 of 3-phospho-D-glycerate (3-PGA) to form glucosyl-3-phosphoglycerate (GPG). UDP-glucose is the preferred substrate, but it can be partially replaced by ADP-glucose. The polypeptide is Glucosyl-3-phosphoglycerate synthase (Petrotoga mobilis (strain DSM 10674 / SJ95)).